The sequence spans 143 residues: Transcriptional regulator MraZ (143 aa).

2 consecutive SpoVT-AbrB domains span residues 5-47 and 76-119; these read EYTH…PLIE and ACEC…DAER.

The protein belongs to the MraZ family. In terms of assembly, forms oligomers.

It localises to the cytoplasm. Its subcellular location is the nucleoid. This chain is Transcriptional regulator MraZ, found in Limosilactobacillus fermentum (strain NBRC 3956 / LMG 18251) (Lactobacillus fermentum).